Consider the following 312-residue polypeptide: Pre-mRNA-splicing factor 38A (312 aa).

An N-terminal protein interaction domain region spans residues 1–179; sequence MANRTVKDAH…VLEEAEQLEP (179 aa). 5 positions are modified to phosphoserine: serine 11, serine 193, serine 194, serine 209, and serine 226. The stretch at 170-204 forms a coiled coil; the sequence is VLEEAEQLEPRVSALEEDMDDVESSEEEEEEDEKL. A disordered region spans residues 181-312; it reads VSALEEDMDD…SHKKSRRGNE (132 aa). Positions 184-202 are enriched in acidic residues; that stretch reads LEEDMDDVESSEEEEEEDE. Basic and acidic residues predominate over residues 203–224; that stretch reads KLERVPSPDHRRRSYRDLDKPR. Composition is skewed to basic residues over residues 225 to 294 and 301 to 312; these read RSPA…RSHS and KKSHKKSRRGNE.

Belongs to the PRP38 family. In terms of assembly, component of the spliceosome B complex. Interacts (via N-terminal interaction domain) with ZMAT2 and MFAP1.

The protein localises to the nucleus. Involved in pre-mRNA splicing as a component of the spliceosome. This Mus musculus (Mouse) protein is Pre-mRNA-splicing factor 38A (Prpf38a).